Consider the following 243-residue polypeptide: Ribosomal RNA small subunit methyltransferase E 2 (243 aa).

Belongs to the RNA methyltransferase RsmE family.

The protein resides in the cytoplasm. The enzyme catalyses uridine(1498) in 16S rRNA + S-adenosyl-L-methionine = N(3)-methyluridine(1498) in 16S rRNA + S-adenosyl-L-homocysteine + H(+). Functionally, specifically methylates the N3 position of the uracil ring of uridine 1498 (m3U1498) in 16S rRNA. Acts on the fully assembled 30S ribosomal subunit. This chain is Ribosomal RNA small subunit methyltransferase E 2 (rsmE2), found in Borreliella burgdorferi (strain ATCC 35210 / DSM 4680 / CIP 102532 / B31) (Borrelia burgdorferi).